The following is a 235-amino-acid chain: Ribonuclease 3 (235 aa).

In terms of domain architecture, RNase III spans 7-131 (LSALEARIGH…IIGAVFLDGG (125 aa)). Residue E45 participates in Mg(2+) binding. D49 is an active-site residue. Residues D117 and E120 each contribute to the Mg(2+) site. Residue E120 is part of the active site. Residues 156–225 (DPKTTLQEWA…AAAFLTREKI (70 aa)) form the DRBM domain.

This sequence belongs to the ribonuclease III family. In terms of assembly, homodimer. Mg(2+) is required as a cofactor.

The protein localises to the cytoplasm. The enzyme catalyses Endonucleolytic cleavage to 5'-phosphomonoester.. In terms of biological role, digests double-stranded RNA. Involved in the processing of primary rRNA transcript to yield the immediate precursors to the large and small rRNAs (23S and 16S). Processes some mRNAs, and tRNAs when they are encoded in the rRNA operon. Processes pre-crRNA and tracrRNA of type II CRISPR loci if present in the organism. This Methylocella silvestris (strain DSM 15510 / CIP 108128 / LMG 27833 / NCIMB 13906 / BL2) protein is Ribonuclease 3.